The chain runs to 508 residues: Photosystem II CP47 reaction center protein (508 aa).

Transmembrane regions (helical) follow at residues 21 to 36 (SVHIMHTALVAGWAGS), 101 to 115 (IVFSGLCFLAAIWHW), 140 to 156 (GIHLFLSGVACFGFGAF), 203 to 218 (IAAGTLGILAGLFHLS), 237 to 252 (VLSSSIAAVFFAAFVV), and 457 to 472 (SFALLFFFGHIWHGAR).

The protein belongs to the PsbB/PsbC family. PsbB subfamily. PSII is composed of 1 copy each of membrane proteins PsbA, PsbB, PsbC, PsbD, PsbE, PsbF, PsbH, PsbI, PsbJ, PsbK, PsbL, PsbM, PsbT, PsbX, PsbY, PsbZ, Psb30/Ycf12, at least 3 peripheral proteins of the oxygen-evolving complex and a large number of cofactors. It forms dimeric complexes. The cofactor is Binds multiple chlorophylls. PSII binds additional chlorophylls, carotenoids and specific lipids..

It is found in the plastid. The protein resides in the chloroplast thylakoid membrane. One of the components of the core complex of photosystem II (PSII). It binds chlorophyll and helps catalyze the primary light-induced photochemical processes of PSII. PSII is a light-driven water:plastoquinone oxidoreductase, using light energy to abstract electrons from H(2)O, generating O(2) and a proton gradient subsequently used for ATP formation. This Aethionema grandiflorum (Persian stone-cress) protein is Photosystem II CP47 reaction center protein.